Here is a 400-residue protein sequence, read N- to C-terminus: Multiphosphoryl transfer protein (400 aa).

The PTS EIIA type-2 domain maps to Leu-2 to Glu-142. The active-site Tele-phosphohistidine intermediate; for EIIA activity is the His-62. Residue His-62 is modified to Phosphohistidine; by HPr. Positions Ala-310–Gly-400 constitute an HPr domain. His-324 serves as the catalytic Pros-phosphohistidine intermediate; for HPr activity. Residue His-324 is modified to Phosphohistidine; by EI.

It localises to the cytoplasm. Functionally, the phosphoenolpyruvate-dependent sugar phosphotransferase system (sugar PTS), a major carbohydrate active transport system, catalyzes the phosphorylation of incoming sugar substrates concomitantly with their translocation across the cell membrane. The enzyme II FruAB PTS system is involved in fructose transport. This chain is Multiphosphoryl transfer protein, found in Vibrio cholerae serotype O1 (strain ATCC 39315 / El Tor Inaba N16961).